Here is a 166-residue protein sequence, read N- to C-terminus: MSDQDALDTQEKELLEMKERVAEMEAEAAKLRAMQEQLDNETEALRNDKESIDAQSVYVGNVDYSVTPEELQSHFASCGSVNRVTILCDKFTGHPKGFAYIEFSEPSLVPNALLLNGSMLHERPLKVTPKRTNVPGMSRGRGRGRGRGRGRGRGGYRGRARGFAPY.

The RRM domain maps to 55 to 132; it reads QSVYVGNVDY…RPLKVTPKRT (78 aa). The disordered stretch occupies residues 129 to 166; sequence PKRTNVPGMSRGRGRGRGRGRGRGRGGYRGRARGFAPY. A compositionally biased stretch (basic residues) spans 140–160; the sequence is GRGRGRGRGRGRGRGGYRGRA.

It is found in the nucleus. This Schizosaccharomyces pombe (strain 972 / ATCC 24843) (Fission yeast) protein is Polyadenylate-binding protein 2 (pab2).